The sequence spans 480 residues: Uridine/deoxyuridine transporter (480 aa).

14 consecutive transmembrane segments (helical) span residues 14 to 34 (VGSI…FQLN), 55 to 75 (SIAL…LFLP), 93 to 113 (LTMI…LMIG), 115 to 135 (ILQG…HVKV), 147 to 167 (ILTS…GWLV), 174 to 194 (SVFF…SFGT), 207 to 227 (WTGV…VNAL), 239 to 259 (WLLA…FWQV), 280 to 300 (GLLI…NGII), 320 to 340 (LVTL…SGFL), 358 to 378 (IIGI…LLLL), 382 to 402 (FIGI…GIVL), 417 to 437 (GMFN…PTVL), and 449 to 469 (ISGI…SFLI).

This sequence belongs to the major facilitator superfamily. EmrB family.

It is found in the cell membrane. Functionally, responsible for the uptake of uridine and deoxyuridine. Not involved in purine nucleoside uptake. This Lactococcus lactis subsp. cremoris (strain MG1363) protein is Uridine/deoxyuridine transporter.